A 200-amino-acid polypeptide reads, in one-letter code: MAASQQQASATTSTASVSGPGSAGGSGPQQQPQPPAQLVGPAQSGLLQQQQQDFDPVQRYKMLIPQLKESLQTLMKVAAQNLIQNTNIDNGQKSSDGPIQRFDKCLEEFYALCDQLELCLRLAHECLSQSCDSAKHSPTLVPTATKPDAVQPDSLPYPQYLAVIKAQIACAKDIHTALLDCANKVTGKTPAPPTGPGGTL.

Low complexity-rich tracts occupy residues 1-20 (MAAS…VSGP) and 36-48 (AQLV…GLLQ). Residues 1-48 (MAASQQQASATTSTASVSGPGSAGGSGPQQQPQPPAQLVGPAQSGLLQ) are disordered. Position 2 is an N-acetylalanine (alanine 2).

The protein belongs to the Mediator complex subunit 29 family. As to quaternary structure, component of the TRAP/SMCC mediator complex. Interacts with MED20/TRFP. Associates with the MED18-MED20 heteromer.

Its subcellular location is the nucleus. Functionally, component of the mediator complex, a complex that can either repress or activate transcription. Mediator complexes are essential for basal and regulated expression of nearly all RNA polymerase II-dependent genes. They may act as a bridge, conveying regulatory information from enhancers and other control elements to the promoter. In Bos taurus (Bovine), this protein is Mediator of RNA polymerase II transcription subunit 29 (MED29).